A 314-amino-acid chain; its full sequence is D-alanine--D-alanine ligase (314 aa).

One can recognise an ATP-grasp domain in the interval 114–309 (KQLWRAHGLP…FDALVLRILD (196 aa)). 140–195 (IEALGLPLIVKPVHEGSTIGISIVETRDALIAAHAEASRFDSAIMAERFVQGEEYT) serves as a coordination point for ATP. Mg(2+) is bound by residues Asp263, Glu276, and Asn278.

This sequence belongs to the D-alanine--D-alanine ligase family. Mg(2+) serves as cofactor. It depends on Mn(2+) as a cofactor.

It localises to the cytoplasm. It catalyses the reaction 2 D-alanine + ATP = D-alanyl-D-alanine + ADP + phosphate + H(+). It functions in the pathway cell wall biogenesis; peptidoglycan biosynthesis. In terms of biological role, cell wall formation. The protein is D-alanine--D-alanine ligase of Chromohalobacter salexigens (strain ATCC BAA-138 / DSM 3043 / CIP 106854 / NCIMB 13768 / 1H11).